Here is a 566-residue protein sequence, read N- to C-terminus: E3 ubiquitin-protein ligase RNF220 (566 aa).

K277 participates in a covalent cross-link: Glycyl lysine isopeptide (Lys-Gly) (interchain with G-Cter in SUMO2). The segment at 277 to 297 (KREGESPTASPHSSATDDLHH) is disordered. S390 carries the phosphoserine modification. Residues 485 to 513 (EDSAVTTFEALKARVRELERQLSRGDRYK) are a coiled coil. The required for targeting to the cytoplasm stretch occupies residues 514-522 (CLICMDSYS). The RING-type zinc finger occupies 514–553 (CLICMDSYSMPLTSIQCWHVHCEECWLRTLGAKKLCPQCY).

In terms of assembly, interacts with SIN3B. Interacts with CTNNB1 (via Armadillo repeats 2-8). Interacts with USP7 (via MATH domain). Post-translationally, auto-ubiquitinated; leads to proteasomal degradation.

It localises to the cytoplasm. The catalysed reaction is S-ubiquitinyl-[E2 ubiquitin-conjugating enzyme]-L-cysteine + [acceptor protein]-L-lysine = [E2 ubiquitin-conjugating enzyme]-L-cysteine + N(6)-ubiquitinyl-[acceptor protein]-L-lysine.. Its pathway is protein modification; protein ubiquitination. E3 ubiquitin-protein ligase that promotes the ubiquitination and proteasomal degradation of SIN3B. Independently of its E3 ligase activity, acts as a CTNNB1 stabilizer through USP7-mediated deubiquitination of CTNNB1 promoting Wnt signaling. The sequence is that of E3 ubiquitin-protein ligase RNF220 (RNF220) from Bos taurus (Bovine).